A 358-amino-acid chain; its full sequence is Carbamoyl phosphate synthase small chain (358 aa).

The segment at 1–172 is CPSase; the sequence is MKAALALEDG…EAKRFESDGD (172 aa). 3 residues coordinate L-glutamine: Ser45, Gly222, and Gly224. One can recognise a Glutamine amidotransferase type-1 domain in the interval 174–358; the sequence is EVVLVDCGVK…RYVDMLREYR (185 aa). Catalysis depends on Cys249, which acts as the Nucleophile. Residues Leu250, Gln253, Asn291, and Phe294 each contribute to the L-glutamine site. Active-site residues include His333 and Glu335.

Belongs to the CarA family. Composed of two chains; the small (or glutamine) chain promotes the hydrolysis of glutamine to ammonia, which is used by the large (or ammonia) chain to synthesize carbamoyl phosphate. Tetramer of heterodimers (alpha,beta)4.

It carries out the reaction hydrogencarbonate + L-glutamine + 2 ATP + H2O = carbamoyl phosphate + L-glutamate + 2 ADP + phosphate + 2 H(+). The enzyme catalyses L-glutamine + H2O = L-glutamate + NH4(+). It functions in the pathway amino-acid biosynthesis; L-arginine biosynthesis; carbamoyl phosphate from bicarbonate: step 1/1. It participates in pyrimidine metabolism; UMP biosynthesis via de novo pathway; (S)-dihydroorotate from bicarbonate: step 1/3. Its function is as follows. Small subunit of the glutamine-dependent carbamoyl phosphate synthetase (CPSase). CPSase catalyzes the formation of carbamoyl phosphate from the ammonia moiety of glutamine, carbonate, and phosphate donated by ATP, constituting the first step of 2 biosynthetic pathways, one leading to arginine and/or urea and the other to pyrimidine nucleotides. The small subunit (glutamine amidotransferase) binds and cleaves glutamine to supply the large subunit with the substrate ammonia. In Archaeoglobus fulgidus (strain ATCC 49558 / DSM 4304 / JCM 9628 / NBRC 100126 / VC-16), this protein is Carbamoyl phosphate synthase small chain.